The following is a 473-amino-acid chain: Photosystem II CP43 reaction center protein (473 aa).

A propeptide spanning residues 1–14 (MKTLYSLRRFYHVE) is cleaved from the precursor. Thr15 bears the N-acetylthreonine mark. Thr15 bears the Phosphothreonine mark. Helical transmembrane passes span 69–93 (LFEV…PHLA), 134–155 (LLGP…KDRN), 178–200 (KALY…RKIT), 255–275 (KPFA…LSYS), and 291–312 (WFNN…ASQA). Glu367 lines the [CaMn4O5] cluster pocket. Residues 447–471 (RARAAAAGFEKGIDRDFEPVLSMTP) form a helical membrane-spanning segment.

This sequence belongs to the PsbB/PsbC family. PsbC subfamily. As to quaternary structure, PSII is composed of 1 copy each of membrane proteins PsbA, PsbB, PsbC, PsbD, PsbE, PsbF, PsbH, PsbI, PsbJ, PsbK, PsbL, PsbM, PsbT, PsbX, PsbY, PsbZ, Psb30/Ycf12, at least 3 peripheral proteins of the oxygen-evolving complex and a large number of cofactors. It forms dimeric complexes. Requires Binds multiple chlorophylls and provides some of the ligands for the Ca-4Mn-5O cluster of the oxygen-evolving complex. It may also provide a ligand for a Cl- that is required for oxygen evolution. PSII binds additional chlorophylls, carotenoids and specific lipids. as cofactor.

Its subcellular location is the plastid. The protein localises to the chloroplast thylakoid membrane. In terms of biological role, one of the components of the core complex of photosystem II (PSII). It binds chlorophyll and helps catalyze the primary light-induced photochemical processes of PSII. PSII is a light-driven water:plastoquinone oxidoreductase, using light energy to abstract electrons from H(2)O, generating O(2) and a proton gradient subsequently used for ATP formation. The chain is Photosystem II CP43 reaction center protein from Nicotiana tabacum (Common tobacco).